We begin with the raw amino-acid sequence, 95 residues long: Citrate lyase acyl carrier protein (95 aa).

S14 is subject to O-(phosphoribosyl dephospho-coenzyme A)serine.

It belongs to the CitD family. As to quaternary structure, oligomer with a subunit composition of (alpha,beta,gamma)6.

It localises to the cytoplasm. Functionally, covalent carrier of the coenzyme of citrate lyase. This chain is Citrate lyase acyl carrier protein, found in Haemophilus ducreyi (strain 35000HP / ATCC 700724).